Here is a 262-residue protein sequence, read N- to C-terminus: Acyl-[acyl-carrier-protein]--UDP-N-acetylglucosamine O-acyltransferase (262 aa).

This sequence belongs to the transferase hexapeptide repeat family. LpxA subfamily. In terms of assembly, homotrimer.

Its subcellular location is the cytoplasm. The catalysed reaction is a (3R)-hydroxyacyl-[ACP] + UDP-N-acetyl-alpha-D-glucosamine = a UDP-3-O-[(3R)-3-hydroxyacyl]-N-acetyl-alpha-D-glucosamine + holo-[ACP]. Its pathway is glycolipid biosynthesis; lipid IV(A) biosynthesis; lipid IV(A) from (3R)-3-hydroxytetradecanoyl-[acyl-carrier-protein] and UDP-N-acetyl-alpha-D-glucosamine: step 1/6. Functionally, involved in the biosynthesis of lipid A, a phosphorylated glycolipid that anchors the lipopolysaccharide to the outer membrane of the cell. This is Acyl-[acyl-carrier-protein]--UDP-N-acetylglucosamine O-acyltransferase from Vibrio vulnificus (strain CMCP6).